Consider the following 471-residue polypeptide: Putative pentatricopeptide repeat-containing protein At1g53330 (471 aa).

PPR repeat units follow at residues 46-81 (SLLC…RIVP), 82-116 (TEII…RCQR), 117-147 (TVKS…IDEF), 151-185 (DACT…KVKP), 186-221 (TGVT…GVRP), 222-256 (TVHI…KIKV), 257-291 (DAAI…GCKP), 292-326 (DTVT…GLKP), 327-361 (DVIS…GCSP), and 362-396 (DTLS…GYKP).

It belongs to the PPR family. P subfamily.

Its function is as follows. Involved during embryo development. This is Putative pentatricopeptide repeat-containing protein At1g53330 from Arabidopsis thaliana (Mouse-ear cress).